The following is a 62-amino-acid chain: Large ribosomal subunit protein eL24 (62 aa).

Cys-6, Cys-9, Cys-32, and Cys-36 together coordinate Zn(2+). The segment at 6-36 (CSFCEGKIEPGCGKKYVKKDGSVMQFCSSKC) adopts a C4-type zinc-finger fold.

The protein belongs to the eukaryotic ribosomal protein eL24 family. In terms of assembly, part of the 50S ribosomal subunit. Forms a cluster with proteins L3 and L14. The cofactor is Zn(2+).

Functionally, binds to the 23S rRNA. This is Large ribosomal subunit protein eL24 from Methanococcus vannielii (strain ATCC 35089 / DSM 1224 / JCM 13029 / OCM 148 / SB).